Consider the following 298-residue polypeptide: Bifunctional protein FolD (298 aa).

NADP(+) contacts are provided by residues Gly167–Ser169, Ser192, and Val233.

It belongs to the tetrahydrofolate dehydrogenase/cyclohydrolase family. In terms of assembly, homodimer.

It carries out the reaction (6R)-5,10-methylene-5,6,7,8-tetrahydrofolate + NADP(+) = (6R)-5,10-methenyltetrahydrofolate + NADPH. It catalyses the reaction (6R)-5,10-methenyltetrahydrofolate + H2O = (6R)-10-formyltetrahydrofolate + H(+). Its pathway is one-carbon metabolism; tetrahydrofolate interconversion. Catalyzes the oxidation of 5,10-methylenetetrahydrofolate to 5,10-methenyltetrahydrofolate and then the hydrolysis of 5,10-methenyltetrahydrofolate to 10-formyltetrahydrofolate. The sequence is that of Bifunctional protein FolD from Chelativorans sp. (strain BNC1).